We begin with the raw amino-acid sequence, 209 residues long: Uracil phosphoribosyltransferase (209 aa).

Residues arginine 79, arginine 104, and 131 to 139 each bind 5-phospho-alpha-D-ribose 1-diphosphate; that span reads DPMLATGGS. Uracil-binding positions include isoleucine 194 and 199-201; that span reads GDA. Residue aspartate 200 participates in 5-phospho-alpha-D-ribose 1-diphosphate binding.

This sequence belongs to the UPRTase family. Requires Mg(2+) as cofactor.

It catalyses the reaction UMP + diphosphate = 5-phospho-alpha-D-ribose 1-diphosphate + uracil. The protein operates within pyrimidine metabolism; UMP biosynthesis via salvage pathway; UMP from uracil: step 1/1. Its activity is regulated as follows. Allosterically activated by GTP. Catalyzes the conversion of uracil and 5-phospho-alpha-D-ribose 1-diphosphate (PRPP) to UMP and diphosphate. This chain is Uracil phosphoribosyltransferase, found in Streptococcus equi subsp. zooepidemicus (strain MGCS10565).